A 182-amino-acid chain; its full sequence is Adenine phosphoribosyltransferase (182 aa).

Belongs to the purine/pyrimidine phosphoribosyltransferase family. In terms of assembly, homodimer.

It localises to the cytoplasm. It carries out the reaction AMP + diphosphate = 5-phospho-alpha-D-ribose 1-diphosphate + adenine. It participates in purine metabolism; AMP biosynthesis via salvage pathway; AMP from adenine: step 1/1. Functionally, catalyzes a salvage reaction resulting in the formation of AMP, that is energically less costly than de novo synthesis. This Renibacterium salmoninarum (strain ATCC 33209 / DSM 20767 / JCM 11484 / NBRC 15589 / NCIMB 2235) protein is Adenine phosphoribosyltransferase.